Here is a 492-residue protein sequence, read N- to C-terminus: Phosphatidylinositol 4-kinase type 2-beta (492 aa).

The segment covering 1-11 has biased composition (basic and acidic residues); the sequence is MEPKQTADARD. Residues 1–98 form a disordered region; it reads MEPKQTADAR…SDRENMSGGH (98 aa). In terms of domain architecture, PI3K/PI4K catalytic spans 127–462; that stretch reads GVFPERISQG…VQMPRVVVER (336 aa). Residues 133–139 form a G-loop region; the sequence is ISQGSSG. Ser-140 and Lys-155 together coordinate ATP. Residues 160-162 are important for substrate binding; sequence EPY. The segment at 168–181 is important for interaction with membranes; the sequence is KWTKYFHKICCPCC. Residues 264 to 267 and 278 to 279 contribute to the ATP site; these read QLFV and RK. Residues 271-279 form an important for interaction with membranes region; the sequence is KEADYWLRK. The interval 308 to 316 is catalytic loop; that stretch reads RNTDRGNDN. Residues 353-373 are activation loop; the sequence is AIDNGLAFPFKHPDEWRAYPF. Asp-355 lines the ATP pocket. Residues 368–377 are important for interaction with membranes; that stretch reads WRAYPFHWAW.

Belongs to the PI3/PI4-kinase family. Type II PI4K subfamily.

The protein resides in the cytoplasm. The protein localises to the cytosol. It localises to the golgi apparatus membrane. Its subcellular location is the endoplasmic reticulum membrane. It is found in the cell membrane. The protein resides in the early endosome membrane. It carries out the reaction a 1,2-diacyl-sn-glycero-3-phospho-(1D-myo-inositol) + ATP = a 1,2-diacyl-sn-glycero-3-phospho-(1D-myo-inositol 4-phosphate) + ADP + H(+). Its function is as follows. Contributes to the overall PI4-kinase activity of the cell. This contribution may be especially significant in plasma membrane, endosomal and Golgi compartments. The phosphorylation of phosphatidylinositol (PI) to PI4P is the first committed step in the generation of phosphatidylinositol 4,5-bisphosphate (PIP2), a precursor of the second messenger inositol 1,4,5-trisphosphate (InsP3). The sequence is that of Phosphatidylinositol 4-kinase type 2-beta (pi4k2b) from Xenopus tropicalis (Western clawed frog).